Here is a 172-residue protein sequence, read N- to C-terminus: Translation initiation factor IF-3 (172 aa).

It belongs to the IF-3 family. As to quaternary structure, monomer.

The protein resides in the cytoplasm. IF-3 binds to the 30S ribosomal subunit and shifts the equilibrium between 70S ribosomes and their 50S and 30S subunits in favor of the free subunits, thus enhancing the availability of 30S subunits on which protein synthesis initiation begins. This chain is Translation initiation factor IF-3, found in Bartonella henselae (strain ATCC 49882 / DSM 28221 / CCUG 30454 / Houston 1) (Rochalimaea henselae).